Consider the following 415-residue polypeptide: Lipoyl synthase, mitochondrial (415 aa).

The N-terminal 32 residues, 1-32 (MAASTNRLRFLYSSARTVPQTGSITPISRRTY), are a transit peptide targeting the mitochondrion. Polar residues predominate over residues 20–32 (QTGSITPISRRTY). A disordered region spans residues 20–53 (QTGSITPISRRTYATTEPSPSATGAPATARKRTN). Residues 33–47 (ATTEPSPSATGAPAT) show a composition bias toward low complexity. [4Fe-4S] cluster is bound by residues Cys132, Cys137, Cys143, Cys163, Cys167, Cys170, and Ser378. Residues 146-367 (GSDKSAATAT…RQRALDMGFL (222 aa)) form the Radical SAM core domain. The interval 395 to 415 (AAGTAGESVTDSKAAVDEATR) is disordered.

This sequence belongs to the radical SAM superfamily. Lipoyl synthase family. [4Fe-4S] cluster is required as a cofactor.

It is found in the mitochondrion. The catalysed reaction is [[Fe-S] cluster scaffold protein carrying a second [4Fe-4S](2+) cluster] + N(6)-octanoyl-L-lysyl-[protein] + 2 oxidized [2Fe-2S]-[ferredoxin] + 2 S-adenosyl-L-methionine + 4 H(+) = [[Fe-S] cluster scaffold protein] + N(6)-[(R)-dihydrolipoyl]-L-lysyl-[protein] + 4 Fe(3+) + 2 hydrogen sulfide + 2 5'-deoxyadenosine + 2 L-methionine + 2 reduced [2Fe-2S]-[ferredoxin]. The protein operates within protein modification; protein lipoylation via endogenous pathway; protein N(6)-(lipoyl)lysine from octanoyl-[acyl-carrier-protein]: step 2/2. In terms of biological role, catalyzes the radical-mediated insertion of two sulfur atoms into the C-6 and C-8 positions of the octanoyl moiety bound to the lipoyl domains of lipoate-dependent enzymes, thereby converting the octanoylated domains into lipoylated derivatives. This Aspergillus flavus (strain ATCC 200026 / FGSC A1120 / IAM 13836 / NRRL 3357 / JCM 12722 / SRRC 167) protein is Lipoyl synthase, mitochondrial.